Here is a 467-residue protein sequence, read N- to C-terminus: UDP-N-acetylmuramate--L-alanine ligase (467 aa).

112-118 (GTHGKTT) contacts ATP.

It belongs to the MurCDEF family.

It localises to the cytoplasm. The catalysed reaction is UDP-N-acetyl-alpha-D-muramate + L-alanine + ATP = UDP-N-acetyl-alpha-D-muramoyl-L-alanine + ADP + phosphate + H(+). It participates in cell wall biogenesis; peptidoglycan biosynthesis. Its function is as follows. Cell wall formation. This is UDP-N-acetylmuramate--L-alanine ligase from Polaromonas sp. (strain JS666 / ATCC BAA-500).